The chain runs to 591 residues: CTP synthase 1 (591 aa).

At Lys-100 the chain carries N6-acetyllysine. The Glutamine amidotransferase type-1 domain occupies 300–554; the sequence is SIALVGKYTK…LASVGRLSHY (255 aa). Catalysis depends on for GATase activity residues Cys-399, His-526, and Glu-528. Residues Ser-562, Ser-568, Ser-571, Ser-573, Ser-574, Ser-575, Ser-578, and Ser-587 each carry the phosphoserine modification. Residues 562 to 591 are disordered; that stretch reads SPRDTYSDRSGSSSPDSEITELKFPSINHD. Residues 569 to 578 are compositionally biased toward low complexity; the sequence is DRSGSSSPDS.

It belongs to the CTP synthase family. In terms of tissue distribution, widely expressed.

It is found in the cytoplasm. Its subcellular location is the cytosol. The enzyme catalyses UTP + L-glutamine + ATP + H2O = CTP + L-glutamate + ADP + phosphate + 2 H(+). It participates in pyrimidine metabolism; CTP biosynthesis via de novo pathway; CTP from UDP: step 2/2. With respect to regulation, activated by GTP and inhibited by CTP. Functionally, this enzyme is involved in the de novo synthesis of CTP, a precursor of DNA, RNA and phospholipids. Catalyzes the ATP-dependent amination of UTP to CTP with either L-glutamine or ammonia as a source of nitrogen. This enzyme and its product, CTP, play a crucial role in the proliferation of activated lymphocytes and therefore in immunity. The polypeptide is CTP synthase 1 (Homo sapiens (Human)).